The following is a 193-amino-acid chain: Potassium-transporting ATPase KdpC subunit (193 aa).

Residues 14–34 (ITFTFLVLCGLVYPLIVTGIA) traverse the membrane as a helical segment.

Belongs to the KdpC family. In terms of assembly, the system is composed of three essential subunits: KdpA, KdpB and KdpC.

It localises to the cell membrane. In terms of biological role, part of the high-affinity ATP-driven potassium transport (or Kdp) system, which catalyzes the hydrolysis of ATP coupled with the electrogenic transport of potassium into the cytoplasm. This subunit acts as a catalytic chaperone that increases the ATP-binding affinity of the ATP-hydrolyzing subunit KdpB by the formation of a transient KdpB/KdpC/ATP ternary complex. This chain is Potassium-transporting ATPase KdpC subunit, found in Bacillus mycoides (strain KBAB4) (Bacillus weihenstephanensis).